Here is a 218-residue protein sequence, read N- to C-terminus: Ribose-5-phosphate isomerase A (218 aa).

Residues 28 to 31, 81 to 84, and 94 to 97 contribute to the substrate site; these read TGST, DGAD, and KGGG. Residue E103 is the Proton acceptor of the active site. Residue K121 coordinates substrate.

This sequence belongs to the ribose 5-phosphate isomerase family. Homodimer.

It carries out the reaction aldehydo-D-ribose 5-phosphate = D-ribulose 5-phosphate. Its pathway is carbohydrate degradation; pentose phosphate pathway; D-ribose 5-phosphate from D-ribulose 5-phosphate (non-oxidative stage): step 1/1. In terms of biological role, catalyzes the reversible conversion of ribose-5-phosphate to ribulose 5-phosphate. The polypeptide is Ribose-5-phosphate isomerase A (Colwellia psychrerythraea (strain 34H / ATCC BAA-681) (Vibrio psychroerythus)).